A 962-amino-acid polypeptide reads, in one-letter code: Phagocyte signaling-impaired protein (962 aa).

TPR repeat units lie at residues 45 to 78 (LCARALKGLALLRLGRYEESHGCLQAVAEDKPTD), 79 to 112 (DSTLQVLSFCYREMEQLNKIVELYQHAVKKNPGN), and 523 to 560 (QIQLDSMGYVHCQLLPLCGRFSGARNSYDTTMKFFTNS). The tract at residues 856-880 (TKVKKKQGDNKTQDTPQPVSEKERS) is disordered.

It belongs to the MDM20/NAA25 family. Component of the N-terminal acetyltransferase B (NatB) complex.

The protein resides in the lysosome. Functionally, non-catalytic subunit of the NatB complex which catalyzes acetylation of the N-terminal methionine residues of proteins beginning with Met-Asp or Met-Glu. Has 2 roles in the larval immune response: required both for the phagocytic degradation of internalized bacteria and for the induction of Defensin in the fat body. Within the phagocytic blood cells, has a role in detection of infection and activation of the humoral immune response. The polypeptide is Phagocyte signaling-impaired protein (Drosophila pseudoobscura pseudoobscura (Fruit fly)).